A 388-amino-acid chain; its full sequence is Succinate--CoA ligase [ADP-forming] subunit beta (388 aa).

In terms of domain architecture, ATP-grasp spans 9-244 (KQLFAEFGLP…PSQEDKREAH (236 aa)). Residues Lys-46, 53 to 55 (GRG), Glu-99, Ser-102, and Glu-107 each bind ATP. Mg(2+) is bound by residues Asn-199 and Asp-213. Substrate-binding positions include Asn-264 and 321–323 (GIV).

Belongs to the succinate/malate CoA ligase beta subunit family. As to quaternary structure, heterotetramer of two alpha and two beta subunits. Mg(2+) serves as cofactor.

It catalyses the reaction succinate + ATP + CoA = succinyl-CoA + ADP + phosphate. It carries out the reaction GTP + succinate + CoA = succinyl-CoA + GDP + phosphate. It participates in carbohydrate metabolism; tricarboxylic acid cycle; succinate from succinyl-CoA (ligase route): step 1/1. Succinyl-CoA synthetase functions in the citric acid cycle (TCA), coupling the hydrolysis of succinyl-CoA to the synthesis of either ATP or GTP and thus represents the only step of substrate-level phosphorylation in the TCA. The beta subunit provides nucleotide specificity of the enzyme and binds the substrate succinate, while the binding sites for coenzyme A and phosphate are found in the alpha subunit. This is Succinate--CoA ligase [ADP-forming] subunit beta from Vibrio vulnificus (strain CMCP6).